A 345-amino-acid polypeptide reads, in one-letter code: Aspartate--ammonia ligase (345 aa).

The protein belongs to the class-II aminoacyl-tRNA synthetase family. AsnA subfamily.

It localises to the cytoplasm. The enzyme catalyses L-aspartate + NH4(+) + ATP = L-asparagine + AMP + diphosphate + H(+). Its pathway is amino-acid biosynthesis; L-asparagine biosynthesis; L-asparagine from L-aspartate (ammonia route): step 1/1. In Bacteroides fragilis (strain ATCC 25285 / DSM 2151 / CCUG 4856 / JCM 11019 / LMG 10263 / NCTC 9343 / Onslow / VPI 2553 / EN-2), this protein is Aspartate--ammonia ligase.